A 367-amino-acid chain; its full sequence is tRNA-specific 2-thiouridylase MnmA (367 aa).

Residues 12–19 (GMSGGVDS) and Met-38 each bind ATP. Residues 98–100 (NPD) are interaction with target base in tRNA. Cys-103 acts as the Nucleophile in catalysis. A disulfide bridge connects residues Cys-103 and Cys-200. ATP is bound at residue Gly-128. Residues 150–152 (KDQ) form an interaction with tRNA region. Cys-200 serves as the catalytic Cysteine persulfide intermediate. Positions 312-313 (RY) are interaction with tRNA.

This sequence belongs to the MnmA/TRMU family. As to quaternary structure, interacts with TusE.

Its subcellular location is the cytoplasm. The enzyme catalyses S-sulfanyl-L-cysteinyl-[protein] + uridine(34) in tRNA + AH2 + ATP = 2-thiouridine(34) in tRNA + L-cysteinyl-[protein] + A + AMP + diphosphate + H(+). In terms of biological role, catalyzes the 2-thiolation of uridine at the wobble position (U34) of tRNA(Lys), tRNA(Glu) and tRNA(Gln), leading to the formation of s(2)U34, the first step of tRNA-mnm(5)s(2)U34 synthesis. Sulfur is provided by IscS, via a sulfur-relay system. Binds ATP and its substrate tRNAs. This chain is tRNA-specific 2-thiouridylase MnmA, found in Photorhabdus laumondii subsp. laumondii (strain DSM 15139 / CIP 105565 / TT01) (Photorhabdus luminescens subsp. laumondii).